Reading from the N-terminus, the 573-residue chain is Probable D-xylulose kinase A (573 aa).

Residues His-100, Arg-171, Asp-287, and Asn-288 each coordinate substrate. ATP is bound by residues Trp-368, 473-474, and Asn-477; that span reads GG.

Belongs to the FGGY kinase family.

The protein resides in the cytoplasm. It carries out the reaction D-xylulose + ATP = D-xylulose 5-phosphate + ADP + H(+). In terms of biological role, highly specific D-xylulose kinase which participates in the catabolism of xylose. Xylose is a major component of hemicelluloses such as xylan. Most fungi utilize D-xylose via three enzymatic reactions, xylose reductase (XR), xylitol dehydrogenase (XDH), and xylulokinase, to form xylulose 5-phosphate, which enters pentose phosphate pathway. This chain is Probable D-xylulose kinase A (xkiA), found in Aspergillus terreus (strain NIH 2624 / FGSC A1156).